The chain runs to 145 residues: Synaptojanin-2-binding protein (145 aa).

At 1–117 (MNGRVDYLVS…VHRGDGEPSG (117 aa)) the chain is on the cytoplasmic side. A PDZ domain is found at 13-100 (EINLTRGPSG…AVSLRVQHRL (88 aa)). Residues 118–138 (VPVAVVLLPVFALTLVAVWAF) traverse the membrane as a helical segment. At 139-145 (VRYRKQL) the chain is on the mitochondrial intermembrane side.

Binds (via the PDZ domain) to isoform 2A of SYNJ2 (via the unique motif in the C-terminus). Interacts (via C-terminus) with RALBP1. Interacts (via PDZ domain) with ACVR2A (via C-terminus) and ACVR2B (via C-terminus). Forms a ternary complex with ACVR2A and RALBP1. Interacts with MAPK12. Interacts with DLL1; enhances DLL1 protein stability, and promotes notch signaling in endothelial cells. As to expression, widely expressed.

It localises to the mitochondrion outer membrane. In terms of biological role, regulates endocytosis of activin type 2 receptor kinases through the Ral/RALBP1-dependent pathway and may be involved in suppression of activin-induced signal transduction. In Rattus norvegicus (Rat), this protein is Synaptojanin-2-binding protein (Synj2bp).